The sequence spans 751 residues: ATP-dependent DNA helicase Hel308 (751 aa).

ATP is bound by residues glutamine 20 and 39 to 46 (IPTASGKT). In terms of domain architecture, Helicase ATP-binding spans 26–196 (EGLLDKSKNF…WLNAKLVTDE (171 aa)). The DEAH box signature appears at 143 to 146 (DEIH). One can recognise a Helicase C-terminal domain in the interval 235 to 435 (NLTDLIVDSV…VLRVHILGLI (201 aa)).

The protein belongs to the helicase family. Hel308 subfamily. Monomer.

It catalyses the reaction Couples ATP hydrolysis with the unwinding of duplex DNA by translocating in the 3'-5' direction.. The catalysed reaction is ATP + H2O = ADP + phosphate + H(+). Functionally, DNA-dependent ATPase and 3'-5' DNA helicase that may be involved in repair of stalled replication forks. In Methanococcus vannielii (strain ATCC 35089 / DSM 1224 / JCM 13029 / OCM 148 / SB), this protein is ATP-dependent DNA helicase Hel308.